The following is a 477-amino-acid chain: Ribulose bisphosphate carboxylase large chain (477 aa).

Residues 1-2 constitute a propeptide that is removed on maturation; it reads MS. At Pro-3 the chain carries N-acetylproline. An N6,N6,N6-trimethyllysine modification is found at Lys-14. Thr-173 is a binding site for substrate. Residue Lys-175 is the Proton acceptor of the active site. Lys-177 is a binding site for substrate. Residues Lys-201, Asp-203, and Glu-204 each contribute to the Mg(2+) site. Lys-201 is subject to N6-carboxylysine. His-294 acts as the Proton acceptor in catalysis. Substrate is bound by residues Arg-295, His-327, and Ser-379.

It belongs to the RuBisCO large chain family. Type I subfamily. Heterohexadecamer of 8 large chains and 8 small chains; disulfide-linked. The disulfide link is formed within the large subunit homodimers. Requires Mg(2+) as cofactor. In terms of processing, the disulfide bond which can form in the large chain dimeric partners within the hexadecamer appears to be associated with oxidative stress and protein turnover.

It localises to the plastid. The protein resides in the chloroplast. The enzyme catalyses 2 (2R)-3-phosphoglycerate + 2 H(+) = D-ribulose 1,5-bisphosphate + CO2 + H2O. The catalysed reaction is D-ribulose 1,5-bisphosphate + O2 = 2-phosphoglycolate + (2R)-3-phosphoglycerate + 2 H(+). Its function is as follows. RuBisCO catalyzes two reactions: the carboxylation of D-ribulose 1,5-bisphosphate, the primary event in carbon dioxide fixation, as well as the oxidative fragmentation of the pentose substrate in the photorespiration process. Both reactions occur simultaneously and in competition at the same active site. The sequence is that of Ribulose bisphosphate carboxylase large chain from Gerbera jamesonii (Transvaal daisy).